Consider the following 1228-residue polypeptide: Clustered mitochondria protein homolog (1228 aa).

The Clu domain maps to 298–557; the sequence is PSSLPSNSID…DNNPLDVGFA (260 aa). Residues 486–519 form a TPR 1 repeat; it reads CYGFDEASNKVIADAEFGSSLDDFAKVFHLKKHE. Residues 671–702 are a coiled coil; it reads LGRVIELAEQELEAQRALREAHLQQVEADNKE. TPR repeat units lie at residues 982–1015 and 1108–1141; these read AESY…YERV and AVNE…FSKE.

The protein belongs to the CLU family. In terms of assembly, may associate with the eukaryotic translation initiation factor 3 (eIF-3) complex.

The protein resides in the cytoplasm. Its function is as follows. mRNA-binding protein involved in proper cytoplasmic distribution of mitochondria. This Eremothecium gossypii (strain ATCC 10895 / CBS 109.51 / FGSC 9923 / NRRL Y-1056) (Yeast) protein is Clustered mitochondria protein homolog.